A 120-amino-acid polypeptide reads, in one-letter code: Movement protein TGB2 (120 aa).

Residues 1 to 8 (MPFAQPPD) lie on the Cytoplasmic side of the membrane. A helical transmembrane segment spans residues 9–29 (YSKSVFPIAVGIAVAVVLFTL). Residues 30-71 (TRSTLPQVGDNIHNLPHGGNYQDGTKRISYCGPRDSFPSSSL) are Lumenal-facing. The helical transmembrane segment at 72–92 (ISSGTPMIIGIIIFLIFAIYV) threads the bilayer. Residues 93 to 120 (SEKWSRSGSRRCSCCVPGAPACTATVHE) are Cytoplasmic-facing.

Belongs to the Tymovirales TGBp2 protein family.

It is found in the host endoplasmic reticulum membrane. Its function is as follows. Plays a role in viral cell-to-cell propagation, by facilitating genome transport to neighboring plant cells through plasmosdesmata,. The sequence is that of Movement protein TGB2 from Crataegus (hawthorn).